The primary structure comprises 389 residues: Phospho-N-acetylmuramoyl-pentapeptide-transferase (389 aa).

The next 10 helical transmembrane spans lie at 25 to 45 (RAVMATVTALLIGLAAGPWVI), 73 to 93 (TMGGVLILIGIFVSCMLWADL), 97 to 117 (FIWIVMIVTFGFGAVGWVDDY), 135 to 155 (FWQTLIGLFAAIYLAFSVSEI), 190 to 210 (VSYPLGMMGFIILSYLVIVGS), 222 to 242 (GLVIMPVILVGAALGAFAYVM), 258 to 278 (GAGELMIFCGAMGGAGLAFLW), 286 to 306 (VFMGDVGALALGGALGTIAVI), 311 to 331 (IVLFVMGGIFVAETVSVMMQV), and 366 to 386 (QVVVRFWIITILLVLIGLSSL).

It belongs to the glycosyltransferase 4 family. MraY subfamily. The cofactor is Mg(2+).

The protein resides in the cell inner membrane. The enzyme catalyses UDP-N-acetyl-alpha-D-muramoyl-L-alanyl-gamma-D-glutamyl-meso-2,6-diaminopimeloyl-D-alanyl-D-alanine + di-trans,octa-cis-undecaprenyl phosphate = di-trans,octa-cis-undecaprenyl diphospho-N-acetyl-alpha-D-muramoyl-L-alanyl-D-glutamyl-meso-2,6-diaminopimeloyl-D-alanyl-D-alanine + UMP. The protein operates within cell wall biogenesis; peptidoglycan biosynthesis. Functionally, catalyzes the initial step of the lipid cycle reactions in the biosynthesis of the cell wall peptidoglycan: transfers peptidoglycan precursor phospho-MurNAc-pentapeptide from UDP-MurNAc-pentapeptide onto the lipid carrier undecaprenyl phosphate, yielding undecaprenyl-pyrophosphoryl-MurNAc-pentapeptide, known as lipid I. The sequence is that of Phospho-N-acetylmuramoyl-pentapeptide-transferase from Polynucleobacter asymbioticus (strain DSM 18221 / CIP 109841 / QLW-P1DMWA-1) (Polynucleobacter necessarius subsp. asymbioticus).